The chain runs to 329 residues: Peroxidase 73 (329 aa).

A signal peptide spans 1–25; sequence MARFSLVVVVTLSLAISMFPDTTTA. Disulfide bonds link Cys36-Cys119, Cys69-Cys74, Cys125-Cys325, and Cys204-Cys236. Residue His67 is the Proton acceptor of the active site. Ca(2+) contacts are provided by Asp68, Val71, Gly73, Asp75, and Ser77. Pro167 is a binding site for substrate. His197 is a heme b binding site. Thr198 is a binding site for Ca(2+). Residue Asn215 is glycosylated (N-linked (GlcNAc...) asparagine). Ca(2+)-binding residues include Asp249, Thr252, and Asp257.

It belongs to the peroxidase family. Classical plant (class III) peroxidase subfamily. Heme b serves as cofactor. It depends on Ca(2+) as a cofactor. Expressed in the whole plant, with the highest expression in roots.

The protein localises to the secreted. The catalysed reaction is 2 a phenolic donor + H2O2 = 2 a phenolic radical donor + 2 H2O. Removal of H(2)O(2), oxidation of toxic reductants, biosynthesis and degradation of lignin, suberization, auxin catabolism, response to environmental stresses such as wounding, pathogen attack and oxidative stress. These functions might be dependent on each isozyme/isoform in each plant tissue. The sequence is that of Peroxidase 73 (PER73) from Arabidopsis thaliana (Mouse-ear cress).